Consider the following 127-residue polypeptide: Large ribosomal subunit protein bL12 (127 aa).

The protein belongs to the bacterial ribosomal protein bL12 family. Homodimer. Part of the ribosomal stalk of the 50S ribosomal subunit. Forms a multimeric L10(L12)X complex, where L10 forms an elongated spine to which 2 to 4 L12 dimers bind in a sequential fashion. Binds GTP-bound translation factors.

In terms of biological role, forms part of the ribosomal stalk which helps the ribosome interact with GTP-bound translation factors. Is thus essential for accurate translation. The polypeptide is Large ribosomal subunit protein bL12 (Streptomyces coelicolor (strain ATCC BAA-471 / A3(2) / M145)).